We begin with the raw amino-acid sequence, 213 residues long: Adenylate kinase (213 aa).

Residue 10–15 (GSGKGT) participates in ATP binding. The NMP stretch occupies residues 30-59 (SVGDLLRNIISSSSELGKKIKGTVESGNLI). Residues R36, 57 to 59 (NLI), 83 to 86 (GFPR), and Q90 contribute to the AMP site. The LID stretch occupies residues 125 to 160 (NRLACLDCKNIYSVSSFKSTTCAKCKSTRLEKRIDD). R126 is an ATP binding site. C129 and C132 together coordinate Zn(2+). 135 to 136 (IY) provides a ligand contact to ATP. The Zn(2+) site is built by C146 and C149. The AMP site is built by R157 and R169. Residue L195 coordinates ATP.

This sequence belongs to the adenylate kinase family. Monomer.

Its subcellular location is the cytoplasm. The enzyme catalyses AMP + ATP = 2 ADP. Its pathway is purine metabolism; AMP biosynthesis via salvage pathway; AMP from ADP: step 1/1. In terms of biological role, catalyzes the reversible transfer of the terminal phosphate group between ATP and AMP. Plays an important role in cellular energy homeostasis and in adenine nucleotide metabolism. The chain is Adenylate kinase from Wolbachia pipientis wMel.